An 84-amino-acid polypeptide reads, in one-letter code: uncharacterized protein (84 aa).

This is an uncharacterized protein from Methanocaldococcus jannaschii (strain ATCC 43067 / DSM 2661 / JAL-1 / JCM 10045 / NBRC 100440) (Methanococcus jannaschii).